The primary structure comprises 421 residues: 4'-demethylrebeccamycin synthase (421 aa).

The protein belongs to the glycosyltransferase 28 family.

It catalyses the reaction 4'-demethylrebeccamycin + H2O = dichloroarcyriaflavin A + beta-D-glucose. It participates in alkaloid biosynthesis. Catalyzes the penultimate step in the biosynthesis of rebeccamycin, an indolocarbazole alkaloid that inhibits topoisomerase 1. Has a wide substrate range, including staurosporine aglycone, EJG-III-108A, J-104303, 6-N-methyl-arcyriaflavin and indolo-[2,3-a]-carbazole. The chain is 4'-demethylrebeccamycin synthase (rebG) from Lentzea aerocolonigenes (Lechevalieria aerocolonigenes).